The sequence spans 311 residues: Ribonuclease HIII (311 aa).

The RNase H type-2 domain occupies 95-311; sequence MSIVGSDEVG…NTEKAFRLLK (217 aa). 3 residues coordinate a divalent metal cation: Asp-101, Glu-102, and Asp-206.

Belongs to the RNase HII family. RnhC subfamily. The cofactor is Mn(2+). Mg(2+) serves as cofactor.

It is found in the cytoplasm. It carries out the reaction Endonucleolytic cleavage to 5'-phosphomonoester.. Functionally, endonuclease that specifically degrades the RNA of RNA-DNA hybrids. The chain is Ribonuclease HIII from Bacillus cereus (strain ZK / E33L).